A 281-amino-acid polypeptide reads, in one-letter code: Peptidyl-prolyl cis-trans isomerase CYP28, chloroplastic (281 aa).

Residues 1–24 (MASSSILIPPILTRRNLLLSTTIA) constitute a chloroplast transit peptide. One can recognise a PPIase cyclophilin-type domain in the interval 66–268 (STTPCSDSTP…KTVFISGCGE (203 aa)).

This sequence belongs to the cyclophilin-type PPIase family. Post-translationally, S-nytrosylated during the hypersensitive disease resistance response. In terms of tissue distribution, ubiquitous. Not detected in roots.

The protein resides in the plastid. The protein localises to the chloroplast. The catalysed reaction is [protein]-peptidylproline (omega=180) = [protein]-peptidylproline (omega=0). Its function is as follows. PPIases accelerate the folding of proteins. It catalyzes the cis-trans isomerization of proline imidic peptide bonds in oligopeptides. The protein is Peptidyl-prolyl cis-trans isomerase CYP28, chloroplastic (CYP28) of Arabidopsis thaliana (Mouse-ear cress).